The chain runs to 360 residues: Endolytic murein transglycosylase (360 aa).

Residues 16-36 form a helical membrane-spanning segment; that stretch reads IILSSIVVLFLIIGGAFLYGK.

Belongs to the transglycosylase MltG family.

The protein localises to the cell membrane. It carries out the reaction a peptidoglycan chain = a peptidoglycan chain with N-acetyl-1,6-anhydromuramyl-[peptide] at the reducing end + a peptidoglycan chain with N-acetylglucosamine at the non-reducing end.. Functions as a peptidoglycan terminase that cleaves nascent peptidoglycan strands endolytically to terminate their elongation. The chain is Endolytic murein transglycosylase from Bacillus subtilis (strain 168).